The following is an 86-amino-acid chain: RNA-binding protein Hfq (86 aa).

One can recognise a Sm domain in the interval 9–68 (DPYLNTLRKEKVGVSIYLVNGIKLQGTIESFDQFVILLKNTVSQMVYKHAISTVVPVRPI).

This sequence belongs to the Hfq family. As to quaternary structure, homohexamer.

In terms of biological role, RNA chaperone that binds small regulatory RNA (sRNAs) and mRNAs to facilitate mRNA translational regulation in response to envelope stress, environmental stress and changes in metabolite concentrations. Also binds with high specificity to tRNAs. The protein is RNA-binding protein Hfq of Pseudomonas fluorescens (strain Pf0-1).